A 565-amino-acid chain; its full sequence is Translation machinery-associated protein 64 (565 aa).

The PUA domain occupies 89 to 170 (LPIVLTHGFV…VAVKIIHHFN (82 aa)). Residues 362–447 (TLYKPFNLAK…GEILHPLLTN (86 aa)) form the SWIB/MDM2 domain. Residues 475–547 (IKIITEMKIG…SIIDHLNKLG (73 aa)) form the SUI1 domain.

Belongs to the eIF2D family. Interacts with the 40S ribosomal subunit.

The protein is Translation machinery-associated protein 64 (TMA64) of Saccharomyces cerevisiae (strain ATCC 204508 / S288c) (Baker's yeast).